Here is a 185-residue protein sequence, read N- to C-terminus: Orotate phosphoribosyltransferase (185 aa).

Residues R99, K100, K103, and 125-133 (EDVTTTGGS) contribute to the 5-phospho-alpha-D-ribose 1-diphosphate site. Orotate contacts are provided by T129 and R157.

Belongs to the purine/pyrimidine phosphoribosyltransferase family. PyrE subfamily. As to quaternary structure, homodimer. It depends on Mg(2+) as a cofactor.

It catalyses the reaction orotidine 5'-phosphate + diphosphate = orotate + 5-phospho-alpha-D-ribose 1-diphosphate. It participates in pyrimidine metabolism; UMP biosynthesis via de novo pathway; UMP from orotate: step 1/2. Functionally, catalyzes the transfer of a ribosyl phosphate group from 5-phosphoribose 1-diphosphate to orotate, leading to the formation of orotidine monophosphate (OMP). This is Orotate phosphoribosyltransferase from Methanococcus maripaludis (strain DSM 14266 / JCM 13030 / NBRC 101832 / S2 / LL).